A 130-amino-acid polypeptide reads, in one-letter code: Small ribosomal subunit protein uS9 (130 aa).

Residues 107-130 (DSREVERKKVGLRKARRRPQFSKR) form a disordered region. The segment covering 116 to 130 (VGLRKARRRPQFSKR) has biased composition (basic residues).

This sequence belongs to the universal ribosomal protein uS9 family.

This chain is Small ribosomal subunit protein uS9, found in Marinomonas sp. (strain MWYL1).